Reading from the N-terminus, the 266-residue chain is Glutamate racemase (266 aa).

Residues 9-10 (DS) and 41-42 (YG) contribute to the substrate site. Cysteine 73 serves as the catalytic Proton donor/acceptor. 74–75 (NT) is a substrate binding site. The active-site Proton donor/acceptor is cysteine 183. 184–185 (TH) lines the substrate pocket.

Belongs to the aspartate/glutamate racemases family.

It catalyses the reaction L-glutamate = D-glutamate. Its pathway is cell wall biogenesis; peptidoglycan biosynthesis. Its function is as follows. Provides the (R)-glutamate required for cell wall biosynthesis. This is Glutamate racemase from Shewanella woodyi (strain ATCC 51908 / MS32).